A 161-amino-acid chain; its full sequence is Large-conductance mechanosensitive channel (161 aa).

A run of 2 helical transmembrane segments spans residues 21-41 (VGVIIGAAFNGIVKSLVDGVI) and 79-99 (GAFINTVIQFLIVAVVVFLLV). Residues 142–154 (TAAPKAAAAPVAK) are compositionally biased toward low complexity. The segment at 142 to 161 (TAAPKAAAAPVAKPKTKPKA) is disordered.

It belongs to the MscL family. As to quaternary structure, homopentamer.

It is found in the cell inner membrane. Channel that opens in response to stretch forces in the membrane lipid bilayer. May participate in the regulation of osmotic pressure changes within the cell. The protein is Large-conductance mechanosensitive channel of Caulobacter sp. (strain K31).